The chain runs to 379 residues: Oxidoreductase chry3 (379 aa).

Disordered regions lie at residues 1–23 and 126–150; these read MTTATKPHQGRFRYLTRGSQPTP and EGDDSAPAEEEADTQASSSDDTSHM. A compositionally biased stretch (acidic residues) spans 126–138; sequence EGDDSAPAEEEAD.

This sequence belongs to the asaB hydroxylase/desaturase family.

It functions in the pathway pigment biosynthesis. In terms of biological role, oxidoreductase; part of the gene cluster that mediates the biosynthesis of the yellow pigment chrysogine. Pyruvic acid and anthranilic acid are likely substrates for the nonribosomal peptide synthetase chry1/NRPS14, with pyruvic acid adenylated by the first A domain and anthranilic acid by the second. If pyruvic acid and anthranilic acid are merged and released from chry1/NRPS14 by hydrolysis, a subsequent amidation would lead to 2-pyruvoylaminobenzamide. This process is probably catalyzed by the amidotransferase chry2 using glutamine as amino donor. The dehydrogenase chry5 that has a terminal berberine bridge domain for C-N cyclization could catalyze the cyclization of 2-pyruvoylaminobenzamide to yield acetyl-4(3H)-quinazolidinone. A final reduction of acetyl-4(3H)-quinazolidinone catalyzed by the oxidoreductase chry4 would result in chrysogine. This Gibberella zeae (strain ATCC MYA-4620 / CBS 123657 / FGSC 9075 / NRRL 31084 / PH-1) (Wheat head blight fungus) protein is Oxidoreductase chry3.